We begin with the raw amino-acid sequence, 322 residues long: Ferredoxin--NADP reductase (322 aa).

FAD-binding residues include Asp-33, Gln-41, Tyr-46, Ala-86, Phe-120, Asp-278, and Ser-319.

It belongs to the ferredoxin--NADP reductase type 2 family. As to quaternary structure, homodimer. The cofactor is FAD.

It carries out the reaction 2 reduced [2Fe-2S]-[ferredoxin] + NADP(+) + H(+) = 2 oxidized [2Fe-2S]-[ferredoxin] + NADPH. The chain is Ferredoxin--NADP reductase from Salinispora tropica (strain ATCC BAA-916 / DSM 44818 / JCM 13857 / NBRC 105044 / CNB-440).